Consider the following 176-residue polypeptide: Tubulin polymerization-promoting protein family member 3 (176 aa).

The segment at 132-151 (TGSHKERFDQTGKGKGKSGR) is disordered. Residues 134-151 (SHKERFDQTGKGKGKSGR) are compositionally biased toward basic and acidic residues.

This sequence belongs to the TPPP family.

The protein localises to the cytoplasm. It localises to the cytoskeleton. Its function is as follows. Regulator of microtubule dynamic that has microtubule bundling activity. The polypeptide is Tubulin polymerization-promoting protein family member 3 (tppp3) (Xenopus laevis (African clawed frog)).